A 359-amino-acid chain; its full sequence is Peptide chain release factor 1 (359 aa).

N5-methylglutamine is present on Gln236.

Belongs to the prokaryotic/mitochondrial release factor family. Post-translationally, methylated by PrmC. Methylation increases the termination efficiency of RF1.

It localises to the cytoplasm. Its function is as follows. Peptide chain release factor 1 directs the termination of translation in response to the peptide chain termination codons UAG and UAA. In Streptococcus pyogenes serotype M6 (strain ATCC BAA-946 / MGAS10394), this protein is Peptide chain release factor 1.